Here is a 204-residue protein sequence, read N- to C-terminus: 8-oxoguanine DNA glycosylase/AP lyase (204 aa).

Residues K129 and D147 contribute to the active site.

Belongs to the type-2 OGG1 family.

It catalyses the reaction 2'-deoxyribonucleotide-(2'-deoxyribose 5'-phosphate)-2'-deoxyribonucleotide-DNA = a 3'-end 2'-deoxyribonucleotide-(2,3-dehydro-2,3-deoxyribose 5'-phosphate)-DNA + a 5'-end 5'-phospho-2'-deoxyribonucleoside-DNA + H(+). Its function is as follows. Catalyzes the excision of an oxidatively damaged form of guanine (7,8-dihydro-8-oxoguanine = 8-oxoG) from DNA. Also cleaves the DNA backbone at apurinic/apyrimidinic sites (AP sites). Prefers oligomers containing 8-oxoG:C, 8-oxoG:T and 8-oxoG:G base pairs, and is less effective on oligomers containing 8-oxoG:A mispairs. The sequence is that of 8-oxoguanine DNA glycosylase/AP lyase from Thermoplasma volcanium (strain ATCC 51530 / DSM 4299 / JCM 9571 / NBRC 15438 / GSS1).